A 398-amino-acid chain; its full sequence is Phosphoglycerate kinase (398 aa).

Substrate is bound by residues 23–25 (DLN), R38, 61–64 (HFGR), R120, and R153. ATP is bound by residues K203, E325, and 355–358 (GGDT).

This sequence belongs to the phosphoglycerate kinase family. In terms of assembly, monomer.

The protein resides in the cytoplasm. It carries out the reaction (2R)-3-phosphoglycerate + ATP = (2R)-3-phospho-glyceroyl phosphate + ADP. It participates in carbohydrate degradation; glycolysis; pyruvate from D-glyceraldehyde 3-phosphate: step 2/5. In Sphingopyxis alaskensis (strain DSM 13593 / LMG 18877 / RB2256) (Sphingomonas alaskensis), this protein is Phosphoglycerate kinase.